A 300-amino-acid polypeptide reads, in one-letter code: Probable endonuclease 4 (300 aa).

Zn(2+) is bound by residues His-68, His-109, Glu-144, Asp-178, His-181, His-213, Asp-226, His-228, and Glu-258.

The protein belongs to the AP endonuclease 2 family. It depends on Zn(2+) as a cofactor.

It catalyses the reaction Endonucleolytic cleavage to 5'-phosphooligonucleotide end-products.. Endonuclease IV plays a role in DNA repair. It cleaves phosphodiester bonds at apurinic or apyrimidinic (AP) sites, generating a 3'-hydroxyl group and a 5'-terminal sugar phosphate. This chain is Probable endonuclease 4, found in Latilactobacillus sakei subsp. sakei (strain 23K) (Lactobacillus sakei subsp. sakei).